The primary structure comprises 267 residues: Flap endonuclease Xni (267 aa).

Asp115 contributes to the Mg(2+) binding site. The 5'-3' exonuclease domain occupies 171 to 261 (VAPAQLVDFW…LGFNLREIRY (91 aa)). Residues Leu182, Val193, and Ile196 each coordinate K(+). The tract at residues 195 to 200 (GIGPKT) is interaction with DNA.

It belongs to the Xni family. The cofactor is Mg(2+). It depends on K(+) as a cofactor.

Functionally, has flap endonuclease activity. During DNA replication, flap endonucleases cleave the 5'-overhanging flap structure that is generated by displacement synthesis when DNA polymerase encounters the 5'-end of a downstream Okazaki fragment. The polypeptide is Flap endonuclease Xni (Aeromonas hydrophila subsp. hydrophila (strain ATCC 7966 / DSM 30187 / BCRC 13018 / CCUG 14551 / JCM 1027 / KCTC 2358 / NCIMB 9240 / NCTC 8049)).